Reading from the N-terminus, the 932-residue chain is Protocadherin gamma-A3 (932 aa).

Positions Met-1 to Gly-29 are cleaved as a signal peptide. Cadherin domains lie at Gln-30–Phe-133, Pro-134–Phe-242, Thr-243–Ile-347, Thr-348–Phe-452, Pro-453–Ile-562, and Asp-570–Ala-682. The Extracellular segment spans residues Gln-30–Tyr-692. Residues Asn-265, Asn-419, and Asn-545 are each glycosylated (N-linked (GlcNAc...) asparagine). Asn-685 carries an N-linked (GlcNAc...) asparagine glycan. The helical transmembrane segment at Leu-693–Ala-713 threads the bilayer. Over His-714–Lys-932 the chain is Cytoplasmic. Disordered regions lie at residues Leu-806–Asn-841 and Ala-902–Lys-932. Positions Asn-922–Lys-932 are enriched in basic residues.

It is found in the cell membrane. Functionally, potential calcium-dependent cell-adhesion protein. May be involved in the establishment and maintenance of specific neuronal connections in the brain. The sequence is that of Protocadherin gamma-A3 (PCDHGA3) from Pan troglodytes (Chimpanzee).